The sequence spans 155 residues: Cell division protein SepF (155 aa).

Residues 22–46 (RYVEEPEQRDERPALEKGRAPKEKQ) are compositionally biased toward basic and acidic residues. The disordered stretch occupies residues 22-54 (RYVEEPEQRDERPALEKGRAPKEKQTAGMEQNQ).

The protein belongs to the SepF family. In terms of assembly, homodimer. Interacts with FtsZ.

It localises to the cytoplasm. Its function is as follows. Cell division protein that is part of the divisome complex and is recruited early to the Z-ring. Probably stimulates Z-ring formation, perhaps through the cross-linking of FtsZ protofilaments. Its function overlaps with FtsA. This chain is Cell division protein SepF, found in Shouchella clausii (strain KSM-K16) (Alkalihalobacillus clausii).